Here is an 861-residue protein sequence, read N- to C-terminus: MQEQYRPDMIEPKVQQYWAENKVFKAIKDESKEKYYCLSMFPYPSGRLHMGHVRNYTIGDVISRYQRMLGKNVLQPFGWDAFGLPAEGAAIKNKTAPAKWTYENIAYMKKQLQLLGFGFDWDREIATCKPDYYKWEQWFFTELYKKGLVYKKTSTVNWCPNDETVLANEQVHEGCCWRCDTPVEQKEIPQWFIKITDYAEQLLGGLDTLPQWPDMVKTMQRNWIGRSEGVEITFDVANTNEKVAVYTTRPDTFYGVSYLGIAAAHPLASLAAQNNSELAAFIQEAKNAKVAEADLATMEKKGMATGLFAIHPLTGEKLPIWVANFVLMHYGTGAVMAVPAHDQRDFEFAQKYGLQIKQVIEPIADEEIDLTKQAFTEHGKLVNSAEFDGKDFDGAFNGIADKLEKLGVGKRQVNYRLRDWGVSRQRYWGAPIPMLTLENGDVVPAPMEDLPIILPEDVVMDGVKSPIKADLNWAKTTLNGAPALKETDTFDTFMESSWYYARYTCPQYQNGMLDAEEANYWLPVDQYIGGIEHATMHLLYFRFFHKLLRDAGFVTSDEPADKLLCQGMVLADAFYYTSPTNERIWVSPTQVTLERDEKGRIIKATDPEGRELVHSGMTKMSKSKNNGIDPQEMVEKYGADTVRLFMMFASPAEMTLEWQESGVEGAKRFLGRVWNLVYQYQQNPAKTSLDLTALSAEQKVLRREVHKTIAKVSDDIGRRQTFNTAIAAVMELMNKLTKASLDSEQDRAVMAEALSAVVRMLYPITPHICFELWQALGNESAIDTAEWVKADEAAMVEDEKLIVVQVNGKVRGKVTVAADADEDTVKTIAFADENVKKFIDNQHIVKVIYVVGKLLNVVVKP.

Residues 42 to 52 carry the 'HIGH' region motif; that stretch reads PYPSGRLHMGH. Residues 619 to 623 carry the 'KMSKS' region motif; the sequence is KMSKS. Lys-622 is an ATP binding site.

This sequence belongs to the class-I aminoacyl-tRNA synthetase family.

The protein resides in the cytoplasm. It carries out the reaction tRNA(Leu) + L-leucine + ATP = L-leucyl-tRNA(Leu) + AMP + diphosphate. In Haemophilus influenzae (strain PittEE), this protein is Leucine--tRNA ligase.